The sequence spans 366 residues: tRNA pseudouridine synthase B (366 aa).

Residues methionine 1–valine 55 are disordered. The active-site Nucleophile is aspartate 92.

It belongs to the pseudouridine synthase TruB family. Type 1 subfamily.

The enzyme catalyses uridine(55) in tRNA = pseudouridine(55) in tRNA. In terms of biological role, responsible for synthesis of pseudouridine from uracil-55 in the psi GC loop of transfer RNAs. The protein is tRNA pseudouridine synthase B of Rhodopseudomonas palustris (strain ATCC BAA-98 / CGA009).